Consider the following 460-residue polypeptide: Bifunctional protein GlmU (460 aa).

The interval 1 to 229 (MSNYAIILAA…FEESLGVNDR (229 aa)) is pyrophosphorylase. Residues 8–11 (LAAG), K22, Q72, and 77–78 (GT) contribute to the UDP-N-acetyl-alpha-D-glucosamine site. D102 is a Mg(2+) binding site. UDP-N-acetyl-alpha-D-glucosamine contacts are provided by G139, E154, N169, and N227. N227 serves as a coordination point for Mg(2+). Positions 230–250 (VALATAEDVMRRRINKTHMIN) are linker. The interval 251–460 (GVTFQNPNAT…KKPHHPSQQK (210 aa)) is N-acetyltransferase. Residues R332 and K350 each coordinate UDP-N-acetyl-alpha-D-glucosamine. The active-site Proton acceptor is H362. Y365 and N376 together coordinate UDP-N-acetyl-alpha-D-glucosamine. Residues A379, 385–386 (NY), S404, A422, and R439 each bind acetyl-CoA.

The protein in the N-terminal section; belongs to the N-acetylglucosamine-1-phosphate uridyltransferase family. This sequence in the C-terminal section; belongs to the transferase hexapeptide repeat family. In terms of assembly, homotrimer. Mg(2+) serves as cofactor.

The protein localises to the cytoplasm. It catalyses the reaction alpha-D-glucosamine 1-phosphate + acetyl-CoA = N-acetyl-alpha-D-glucosamine 1-phosphate + CoA + H(+). The enzyme catalyses N-acetyl-alpha-D-glucosamine 1-phosphate + UTP + H(+) = UDP-N-acetyl-alpha-D-glucosamine + diphosphate. Its pathway is nucleotide-sugar biosynthesis; UDP-N-acetyl-alpha-D-glucosamine biosynthesis; N-acetyl-alpha-D-glucosamine 1-phosphate from alpha-D-glucosamine 6-phosphate (route II): step 2/2. It participates in nucleotide-sugar biosynthesis; UDP-N-acetyl-alpha-D-glucosamine biosynthesis; UDP-N-acetyl-alpha-D-glucosamine from N-acetyl-alpha-D-glucosamine 1-phosphate: step 1/1. The protein operates within bacterial outer membrane biogenesis; LPS lipid A biosynthesis. Functionally, catalyzes the last two sequential reactions in the de novo biosynthetic pathway for UDP-N-acetylglucosamine (UDP-GlcNAc). The C-terminal domain catalyzes the transfer of acetyl group from acetyl coenzyme A to glucosamine-1-phosphate (GlcN-1-P) to produce N-acetylglucosamine-1-phosphate (GlcNAc-1-P), which is converted into UDP-GlcNAc by the transfer of uridine 5-monophosphate (from uridine 5-triphosphate), a reaction catalyzed by the N-terminal domain. This Streptococcus thermophilus (strain ATCC BAA-491 / LMD-9) protein is Bifunctional protein GlmU.